The sequence spans 196 residues: RNA pyrophosphohydrolase (196 aa).

Residues 6–149 (GYRPNVGIVI…KRDVYRKVMK (144 aa)) form the Nudix hydrolase domain. The Nudix box motif lies at 38–59 (GGINDNESAEQAMYRELHEEVG).

Belongs to the Nudix hydrolase family. RppH subfamily. It depends on a divalent metal cation as a cofactor.

In terms of biological role, accelerates the degradation of transcripts by removing pyrophosphate from the 5'-end of triphosphorylated RNA, leading to a more labile monophosphorylated state that can stimulate subsequent ribonuclease cleavage. The polypeptide is RNA pyrophosphohydrolase (Haemophilus influenzae (strain ATCC 51907 / DSM 11121 / KW20 / Rd)).